The sequence spans 169 residues: Disulfide bond formation protein B (169 aa).

Over 1–14 (MNNLTLSLHRERRL) the chain is Cytoplasmic. The chain crosses the membrane as a helical span at residues 15–31 (LVLLGLVCLALLAGALY). At 32 to 49 (LQYVKNEDPCPLCIIQRY) the chain is on the periplasmic side. Residues Cys-41 and Cys-44 are joined by a disulfide bond. The chain crosses the membrane as a helical span at residues 50–64 (FFVLIAVFAFIGAGM). Residues 65 to 71 (ASGAGIA) are Cytoplasmic-facing. A helical transmembrane segment spans residues 72 to 89 (VIEALIVLSAAAGVGTAA). Residues 90-144 (RHLYVQLNPGFSCGFDALQPVVDSLPPAHWLPGVFKVAGLCETVYPPIFGILLPG) are Periplasmic-facing. A disulfide bond links Cys-102 and Cys-130. The helical transmembrane segment at 145-163 (WALIAFALIVVPVAASLLR) threads the bilayer. Over 164-169 (HRGRLR) the chain is Cytoplasmic.

Belongs to the DsbB family.

It is found in the cell inner membrane. In terms of biological role, required for disulfide bond formation in some periplasmic proteins. Acts by oxidizing the DsbA protein. The sequence is that of Disulfide bond formation protein B from Burkholderia thailandensis (strain ATCC 700388 / DSM 13276 / CCUG 48851 / CIP 106301 / E264).